Consider the following 324-residue polypeptide: Bacilliredoxin reductase Bdr (324 aa).

At Cys-220 the chain carries S-bacillithiol cysteine disulfide.

As to quaternary structure, interacts with BrxC. The cofactor is FAD. In terms of processing, C-terminal Cys can react with bacillithiol (BSH) to form mixed disulfides. S-bacillithiolation protects Cys residues against overoxidation by acting as a redox switch in response to oxidative stress.

Functionally, S-bacillithiolation is the formation of mixed disulfide bonds between protein thiols and the general thiol reductant bacillithiol (BSH) under oxidative stress. BSH is an equivalent of glutathione (GSH) in Firmicutes. This protein is a NADPH-dependent bacilliredoxin reductase, which debacillithiolates (removes BSH) the S-bacillithiolated BrxB (BrxB-SSB), and to a lesser extent BrxC (BrxC-SSB). Involved in a redox cascade increasing the efficacy of BrxB function by reducing BrxB-SSB and thus reactivating it. Has NADPH-dependent oxidase activity under aerobic conditions producing hydrogen peroxide (H(2)O(2)). This is Bacilliredoxin reductase Bdr from Bacillus subtilis (strain 168).